Reading from the N-terminus, the 134-residue chain is Small ribosomal subunit protein uS11 (134 aa).

The interval 1–21 is disordered; that stretch reads MPPKSRQGAGRKVRRKEKKNV. Over residues 9-21 the composition is skewed to basic residues; it reads AGRKVRRKEKKNV.

It belongs to the universal ribosomal protein uS11 family. As to quaternary structure, part of the 30S ribosomal subunit. Interacts with proteins S7 and S18. Binds to IF-3.

In terms of biological role, located on the platform of the 30S subunit, it bridges several disparate RNA helices of the 16S rRNA. Forms part of the Shine-Dalgarno cleft in the 70S ribosome. This chain is Small ribosomal subunit protein uS11, found in Thermobifida fusca (strain YX).